The primary structure comprises 387 residues: Alkanesulfonate monooxygenase (387 aa).

The protein belongs to the SsuD family.

The catalysed reaction is an alkanesulfonate + FMNH2 + O2 = an aldehyde + FMN + sulfite + H2O + 2 H(+). Catalyzes the desulfonation of aliphatic sulfonates. The protein is Alkanesulfonate monooxygenase of Ralstonia nicotianae (strain ATCC BAA-1114 / GMI1000) (Ralstonia solanacearum).